The following is a 330-amino-acid chain: Biotin synthase (330 aa).

A Radical SAM core domain is found at 55 to 282 (NAVQRSTLLS…TAYVRLSAGR (228 aa)). The [4Fe-4S] cluster site is built by Cys-70, Cys-74, and Cys-77. Positions 114, 145, 205, and 277 each coordinate [2Fe-2S] cluster.

This sequence belongs to the radical SAM superfamily. Biotin synthase family. As to quaternary structure, homodimer. The cofactor is [4Fe-4S] cluster. [2Fe-2S] cluster is required as a cofactor.

The enzyme catalyses (4R,5S)-dethiobiotin + (sulfur carrier)-SH + 2 reduced [2Fe-2S]-[ferredoxin] + 2 S-adenosyl-L-methionine = (sulfur carrier)-H + biotin + 2 5'-deoxyadenosine + 2 L-methionine + 2 oxidized [2Fe-2S]-[ferredoxin]. The protein operates within cofactor biosynthesis; biotin biosynthesis; biotin from 7,8-diaminononanoate: step 2/2. In terms of biological role, catalyzes the conversion of dethiobiotin (DTB) to biotin by the insertion of a sulfur atom into dethiobiotin via a radical-based mechanism. The sequence is that of Biotin synthase from Methylibium petroleiphilum (strain ATCC BAA-1232 / LMG 22953 / PM1).